The primary structure comprises 502 residues: Maturase K (502 aa).

Belongs to the intron maturase 2 family. MatK subfamily.

It is found in the plastid. It localises to the chloroplast. Usually encoded in the trnK tRNA gene intron. Probably assists in splicing its own and other chloroplast group II introns. This chain is Maturase K, found in Fremontodendron californicum (California flannelbush).